The primary structure comprises 101 residues: Immunity protein CdiI-2 (101 aa).

Specifically interacts with the truncated CT fragment of cognate toxin protein CdiA-2, which inhibits CdiA-2 tRNA nuclease activity.

In terms of biological role, immunity protein component of a toxin-immunity protein module, which functions as a cellular contact-dependent growth inhibition (CDI) system. CDI modules allow bacteria to communicate with and inhibit the growth of closely related neighboring bacteria in a contact-dependent fashion. Neutralizes the toxic activity of cognate toxin CdiA (C-terminal 301 residue CT fragment) upon expression in E.coli. Does not inhibit toxic activity of CdiA from other strains of B.pseudomallei. Its function is as follows. Expression of this cdiAIB locus in B.thailandensis confers protection against other bacteria carrying the locus; growth inhibition requires cellular contact. In Burkholderia pseudomallei (strain 1026b), this protein is Immunity protein CdiI-2 (cdiI2).